The following is a 238-amino-acid chain: Phosphoribosylaminoimidazole-succinocarboxamide synthase (238 aa).

Belongs to the SAICAR synthetase family.

It catalyses the reaction 5-amino-1-(5-phospho-D-ribosyl)imidazole-4-carboxylate + L-aspartate + ATP = (2S)-2-[5-amino-1-(5-phospho-beta-D-ribosyl)imidazole-4-carboxamido]succinate + ADP + phosphate + 2 H(+). The protein operates within purine metabolism; IMP biosynthesis via de novo pathway; 5-amino-1-(5-phospho-D-ribosyl)imidazole-4-carboxamide from 5-amino-1-(5-phospho-D-ribosyl)imidazole-4-carboxylate: step 1/2. The sequence is that of Phosphoribosylaminoimidazole-succinocarboxamide synthase from Chlorobium phaeovibrioides (strain DSM 265 / 1930) (Prosthecochloris vibrioformis (strain DSM 265)).